The following is a 309-amino-acid chain: Isoaspartyl peptidase/L-asparaginase (309 aa).

Threonine 166 acts as the Nucleophile in catalysis. Residues 194 to 197 and 217 to 220 each bind substrate; these read RVGD and TGHG.

It belongs to the Ntn-hydrolase family. As to quaternary structure, heterodimer of an alpha and beta chain produced by autocleavage. In terms of processing, cleaved into an alpha and beta chain by autocatalysis; this activates the enzyme. The N-terminal residue of the beta subunit is responsible for the nucleophile hydrolase activity.

The protein localises to the cytoplasm. It catalyses the reaction L-asparagine + H2O = L-aspartate + NH4(+). The catalysed reaction is Cleavage of a beta-linked Asp residue from the N-terminus of a polypeptide.. Has both L-asparaginase and beta-aspartyl peptidase activity. Does not have aspartylglucosaminidase activity and is inactive toward GlcNAc-L-Asn. Likewise, has no activity toward glutamine. The sequence is that of Isoaspartyl peptidase/L-asparaginase (asrgl1) from Xenopus laevis (African clawed frog).